Here is a 267-residue protein sequence, read N- to C-terminus: Glucosamine-6-phosphate deaminase (267 aa).

Residue Asp-72 is the Proton acceptor; for enolization step of the active site. Residue Asp-141 is the For ring-opening step of the active site. Residue His-143 is the Proton acceptor; for ring-opening step of the active site. Residue Glu-148 is the For ring-opening step of the active site.

The protein belongs to the glucosamine/galactosamine-6-phosphate isomerase family. NagB subfamily. In terms of assembly, homohexamer.

It carries out the reaction alpha-D-glucosamine 6-phosphate + H2O = beta-D-fructose 6-phosphate + NH4(+). It functions in the pathway amino-sugar metabolism; N-acetylneuraminate degradation; D-fructose 6-phosphate from N-acetylneuraminate: step 5/5. Its activity is regulated as follows. Allosterically activated by N-acetylglucosamine 6-phosphate (GlcNAc6P). In terms of biological role, catalyzes the reversible isomerization-deamination of glucosamine 6-phosphate (GlcN6P) to form fructose 6-phosphate (Fru6P) and ammonium ion. In Haemophilus ducreyi (strain 35000HP / ATCC 700724), this protein is Glucosamine-6-phosphate deaminase.